A 647-amino-acid chain; its full sequence is MFLEKINQKTGEREWVVAEEDYDMAQELARSRFGDMILDFDRNDKFLAGLKTTIAEKKHENTDGKVHVLDIGTGTGLLSLMAAREGADKVTALEVFKPMGDCARHITSNSPWSDKITVISERSTDVSQIGGSRADIIVAEVFDTELIGEGALRTFKEALERLAKPGCRVVPSTGNVYIVPVESHLLKMFNDIPRLNGEKDEEPLGRCSGTAAVFDVQLSEMKTHEFRELSEPIVAFKFDFEHEEKIIFDESFVREAVAHSSGTIDALLMWWDIDMDRNGTTFIDMGPKWKNKNNYAWRDHWMQAVYYLPEKKKVEMNQTFEIVCNHDEFSLWFSNVGKDKSRSYCVCGLHSMLSRQTVYHVNEMFENQKFKDEVDKLSKGLHVATVGEGSFLGLLAAKTAKRVTIIDGNERFRDIFFKYIHYYKLTNVEIIEKVTSLTDSPDIVLAEPFYMSAMNPWNHLRFLYDVEVLKMMHGDELRVEPHMGVLKAIPEKFEDLQNIASDVGTVNGFDLSFFDEISTKARTATDAIVDEQSLWEYAGIVKGDAVEILRFPIDGRVSSQKCVVNIDNMSSSNAIPMWMEWEFGGINLSTGLLSISSAGVPEWNKGYKQGVYFPITALRNDKSLCLHALFDKSTGDINFQFGKSEDS.

SAM-dependent MTase PRMT-type domains are found at residues 12–332 and 337–647; these read EREW…FSLW and GKDK…SEDS. Active-site residues include E140 and E149.

It belongs to the class I-like SAM-binding methyltransferase superfamily. Protein arginine N-methyltransferase family. PRMT7 subfamily.

Its function is as follows. Arginine methyltransferase that can both catalyze the formation of omega-N monomethylarginine (MMA) and symmetrical dimethylarginine (sDMA). The sequence is that of Protein arginine N-methyltransferase 7 (prmt-7) from Caenorhabditis elegans.